The following is a 389-amino-acid chain: S-adenosylmethionine synthase (389 aa).

Residue His15 participates in ATP binding. Asp17 contributes to the Mg(2+) binding site. Glu43 contacts K(+). L-methionine is bound by residues Glu56 and Gln99. A flexible loop region spans residues 99–109; it reads QSPDIAQGVNE. Residues 166 to 168, 234 to 235, Asp243, 249 to 250, Ala266, and Lys270 each bind ATP; these read DAK, RF, and RK. Asp243 contributes to the L-methionine binding site. Lys274 lines the L-methionine pocket.

This sequence belongs to the AdoMet synthase family. Homotetramer; dimer of dimers. Mg(2+) serves as cofactor. K(+) is required as a cofactor.

The protein resides in the cytoplasm. It carries out the reaction L-methionine + ATP + H2O = S-adenosyl-L-methionine + phosphate + diphosphate. The protein operates within amino-acid biosynthesis; S-adenosyl-L-methionine biosynthesis; S-adenosyl-L-methionine from L-methionine: step 1/1. Functionally, catalyzes the formation of S-adenosylmethionine (AdoMet) from methionine and ATP. The overall synthetic reaction is composed of two sequential steps, AdoMet formation and the subsequent tripolyphosphate hydrolysis which occurs prior to release of AdoMet from the enzyme. The sequence is that of S-adenosylmethionine synthase from Chromobacterium violaceum (strain ATCC 12472 / DSM 30191 / JCM 1249 / CCUG 213 / NBRC 12614 / NCIMB 9131 / NCTC 9757 / MK).